Here is a 769-residue protein sequence, read N- to C-terminus: PDZ domain-containing protein 4 (769 aa).

The PDZ domain occupies 130 to 214 (EVELYKSSHR…TNISLLVARP (85 aa)). Residues 221–315 (RWKDSDRDDF…TNTPGSLRKF (95 aa)) are disordered. Residues 229 to 239 (DFLDDFGSENE) are compositionally biased toward acidic residues. Position 236 is a phosphoserine (Ser236). The segment covering 282 to 298 (RTDESTRNEESSEHDLL) has biased composition (basic and acidic residues). Positions 389–419 (VNRNESLGHEMAMLEEELRHLEFKCRNILRA) form a coiled coil. Residues 445–579 (ASEPKKHELS…RHRGQGQEGE (135 aa)) are disordered. The span at 447-467 (EPKKHELSDISELPEKSDKDS) shows a compositional bias: basic and acidic residues. A Phosphoserine modification is found at Ser454. A compositionally biased stretch (polar residues) spans 468 to 479 (TSAYNTGESCRS). Basic and acidic residues predominate over residues 530-547 (LSRDPEAGRRQHAEERGR).

Brain-specific. Expressed in fetal and adult brain. Up-regulated in synovial carcinomas.

It is found in the cytoplasm. It localises to the cell cortex. The sequence is that of PDZ domain-containing protein 4 (PDZD4) from Homo sapiens (Human).